Here is a 124-residue protein sequence, read N- to C-terminus: Large ribosomal subunit protein eL22y (124 aa).

Belongs to the eukaryotic ribosomal protein eL22 family.

This chain is Large ribosomal subunit protein eL22y (RPL22C), found in Arabidopsis thaliana (Mouse-ear cress).